Consider the following 148-residue polypeptide: Large ribosomal subunit protein bL9 (148 aa).

The protein belongs to the bacterial ribosomal protein bL9 family.

In terms of biological role, binds to the 23S rRNA. The protein is Large ribosomal subunit protein bL9 of Bacillus cytotoxicus (strain DSM 22905 / CIP 110041 / 391-98 / NVH 391-98).